Here is a 950-residue protein sequence, read N- to C-terminus: Serine/threonine-protein kinase 10-A (950 aa).

A Protein kinase domain is found at 36-294 (WEIIGELGDG…AAQLLEHPFV (259 aa)). ATP is bound by residues 42-50 (LGDGAFGKV) and lysine 65. The Proton acceptor role is filled by aspartate 157. The segment covering 319 to 331 (EEQGEAEEEEDSD) has biased composition (acidic residues). Residues 319–478 (EEQGEAEEEE…DSGSNSASES (160 aa)) are disordered. Basic and acidic residues predominate over residues 347-356 (EIGKDIEREQ). The segment covering 365 to 382 (SATSPQKTDSQADNYSQR) has biased composition (polar residues). Over residues 416 to 432 (EPKRNSTAESYRGEEHS) the composition is skewed to basic and acidic residues. Residues 433–445 (SASSQRQRSAQSA) are compositionally biased toward low complexity. The segment covering 452-463 (SFDSPTRYFTNW) has biased composition (polar residues). Residues serine 482, serine 486, and serine 490 each carry the phosphoserine; by PLK1 modification. Positions 634–786 (IKFLEQLKLR…QLRLRQQQEK (153 aa)) form a coiled coil.

Belongs to the protein kinase superfamily. STE Ser/Thr protein kinase family. STE20 subfamily. Homodimer. In terms of processing, autophosphorylates. Phosphorylated by plk1/plx1, suggesting the existence of a feedback loop with plk1/plx1. activation of the protein.

The protein resides in the cell membrane. The catalysed reaction is L-seryl-[protein] + ATP = O-phospho-L-seryl-[protein] + ADP + H(+). It catalyses the reaction L-threonyl-[protein] + ATP = O-phospho-L-threonyl-[protein] + ADP + H(+). Its function is as follows. May act as a polo kinase kinase by mediating phosphorylation of plk1/plx1 and subsequent activation of plk1/plx1 during oocyte maturation. This is Serine/threonine-protein kinase 10-A (stk10-a) from Xenopus laevis (African clawed frog).